The following is a 141-amino-acid chain: Hemoglobin subunit alpha (141 aa).

The 141-residue stretch at 1–141 folds into the Globin domain; it reads VLSSADKANI…VSTVLTSKYR (141 aa). S3 is subject to Phosphoserine. Residues K7 and K11 each carry the N6-succinyllysine modification. K16 carries the N6-acetyllysine; alternate modification. K16 carries the N6-succinyllysine; alternate modification. Y24 carries the phosphotyrosine modification. At K40 the chain carries N6-succinyllysine. S49 is subject to Phosphoserine. An O2-binding site is contributed by H58. H87 contacts heme b. A Phosphoserine modification is found at S102. T108 is subject to Phosphothreonine. S131 carries the phosphoserine modification. Phosphothreonine is present on residues T134 and T137. S138 carries the post-translational modification Phosphoserine.

The protein belongs to the globin family. In terms of assembly, heterotetramer of two alpha chains and two beta chains. Red blood cells.

Its function is as follows. Involved in oxygen transport from the lung to the various peripheral tissues. Hemopressin acts as an antagonist peptide of the cannabinoid receptor CNR1. Hemopressin-binding efficiently blocks cannabinoid receptor CNR1 and subsequent signaling. The polypeptide is Hemoglobin subunit alpha (HBA) (Crocuta crocuta (Spotted hyena)).